A 307-amino-acid chain; its full sequence is N-acetylmuramic acid 6-phosphate etherase 2 (307 aa).

The SIS domain maps to Ile-62 to Lys-225. Glu-90 serves as the catalytic Proton donor. The active site involves Glu-121.

Belongs to the GCKR-like family. MurNAc-6-P etherase subfamily. Homodimer.

The catalysed reaction is N-acetyl-D-muramate 6-phosphate + H2O = N-acetyl-D-glucosamine 6-phosphate + (R)-lactate. It functions in the pathway amino-sugar metabolism; 1,6-anhydro-N-acetylmuramate degradation. It participates in amino-sugar metabolism; N-acetylmuramate degradation. The protein operates within cell wall biogenesis; peptidoglycan recycling. Its function is as follows. Specifically catalyzes the cleavage of the D-lactyl ether substituent of MurNAc 6-phosphate, producing GlcNAc 6-phosphate and D-lactate. Together with AnmK, is also required for the utilization of anhydro-N-acetylmuramic acid (anhMurNAc) either imported from the medium or derived from its own cell wall murein, and thus plays a role in cell wall recycling. The protein is N-acetylmuramic acid 6-phosphate etherase 2 of Vibrio cholerae serotype O1 (strain ATCC 39315 / El Tor Inaba N16961).